Reading from the N-terminus, the 114-residue chain is MSWWQDMDQRGGVSSPSGALASAEPAPASVTLAELLHLVQKGQEVPGLEKRHITATHGEPTASLLPRRPKPWEDAGSAASPCTIALDTRTQPPTIEERSRGSPAAQLDGGPRVS.

Disordered regions lie at residues 1–26 and 53–114; these read MSWW…AEPA and ITAT…PRVS. At S102 the chain carries Phosphoserine.

It is found in the peroxisome. In terms of biological role, may be a peroxin involved in the PTS2-mediated protein import pathway. The chain is Peroxisomal biogenesis factor 39 (Pex39) from Mus musculus (Mouse).